A 317-amino-acid polypeptide reads, in one-letter code: Melanocyte-stimulating hormone receptor (317 aa).

Residues 1–23 (MSGQGPQRRLLGSPNATSPTTPH) are disordered. Topologically, residues 1–37 (MSGQGPQRRLLGSPNATSPTTPHFKLAANQTGPRCLE) are extracellular. A glycan (N-linked (GlcNAc...) asparagine) is linked at Asn-29. A helical transmembrane segment spans residues 38–63 (VSIPNGLFLSLGLVSVVENVLVVAAI). The Cytoplasmic portion of the chain corresponds to 64–72 (AKNRNLHSP). Residues 73–93 (MYYFIGCLAVSDLLVSVTNVL) form a helical membrane-spanning segment. Residues 94 to 118 (ETAVMLLVEAGALAAQAAVVQQLDD) are Extracellular-facing. A helical transmembrane segment spans residues 119-140 (IIDVLICGSMVSSLCFLGAIAV). At 141–163 (DRYLSIFYALRYHSIVTLPRAWR) the chain is on the cytoplasmic side. A helical transmembrane segment spans residues 164 to 183 (AISAIWVASVLSSTLFIAYY). Residues 184-191 (NHTAVLLC) are Extracellular-facing. A helical transmembrane segment spans residues 192-211 (LVSFFVAMLVLMAVLYVHML). Residues 212–240 (ARARQHARGIARLRKRQHSVHQGFGLKGA) are Cytoplasmic-facing. A helical transmembrane segment spans residues 241-266 (ATLTILLGIFFLCWGPFFLHLSLMVL). The Extracellular portion of the chain corresponds to 267–279 (CPQHPICGCVFQN). The helical transmembrane segment at 280-300 (FNLFLTLIICNSIIDPFIYAF) threads the bilayer. The Cytoplasmic segment spans residues 301-317 (RSQELRKTLQEVVLCSW). A lipid anchor (S-palmitoyl cysteine) is attached at Cys-315.

This sequence belongs to the G-protein coupled receptor 1 family. In terms of assembly, interacts with MGRN1, but does not undergo MGRN1-mediated ubiquitination; this interaction competes with GNAS-binding and thus inhibits agonist-induced cAMP production. Interacts with OPN3; the interaction results in a decrease in MC1R-mediated cAMP signaling and ultimately a decrease in melanin production in melanocytes.

It is found in the cell membrane. Functionally, receptor for MSH (alpha, beta and gamma) and ACTH. The activity of this receptor is mediated by G proteins which activate adenylate cyclase. Mediates melanogenesis, the production of eumelanin (black/brown) and phaeomelanin (red/yellow), via regulation of cAMP signaling in melanocytes. This chain is Melanocyte-stimulating hormone receptor (MC1R), found in Vulpes vulpes (Red fox).